The chain runs to 185 residues: Peptidyl-tRNA hydrolase (185 aa).

TRNA is bound at residue Tyr-14. Residue His-19 is the Proton acceptor of the active site. The tRNA site is built by Tyr-65, Asn-67, and Asn-113.

Belongs to the PTH family. In terms of assembly, monomer.

The protein localises to the cytoplasm. It carries out the reaction an N-acyl-L-alpha-aminoacyl-tRNA + H2O = an N-acyl-L-amino acid + a tRNA + H(+). Functionally, hydrolyzes ribosome-free peptidyl-tRNAs (with 1 or more amino acids incorporated), which drop off the ribosome during protein synthesis, or as a result of ribosome stalling. Its function is as follows. Catalyzes the release of premature peptidyl moieties from peptidyl-tRNA molecules trapped in stalled 50S ribosomal subunits, and thus maintains levels of free tRNAs and 50S ribosomes. This Rickettsia conorii (strain ATCC VR-613 / Malish 7) protein is Peptidyl-tRNA hydrolase.